A 133-amino-acid polypeptide reads, in one-letter code: Gamma-crystallin 1 (133 aa).

The 41-residue stretch at 1–41 (WMLYEHPNYTGHQYFLRRGEYPDFQQWMGLNDSIRSCRVIP) folds into the Beta/gamma crystallin 'Greek key' 2 domain. Residues 42 to 46 (QHRGS) form a connecting peptide region. 2 Beta/gamma crystallin 'Greek key' domains span residues 47 to 87 (FRLR…NVLE) and 88 to 130 (GHWI…RRVQ).

It belongs to the beta/gamma-crystallin family. In terms of assembly, monomer.

Functionally, crystallins are the dominant structural components of the vertebrate eye lens. The polypeptide is Gamma-crystallin 1 (Rana temporaria (European common frog)).